A 665-amino-acid chain; its full sequence is MDSSTLSPAVTATDAPIPSYERIRNAADISVIVIYFVVVMAVGLWAMFSTNRGTVGGFFLAGRSMVWWPIGASLFASNIGSGHFVGLAGTGAAAGIAMGGFEWNALVLVVVLGWIFVPIYIKAGVVTMPEYLRKRFGGKRIQIYLSVLSLLLYIFTKISADIFSGAIFINLALGLDIYLAIFILLAITALYTITGGLAAVIYTDTLQTAIMLVGSFILTGFAFNEVGGYEAFMDKYMKAIPTKVSNGNFTAKEECYTPRADSFHIFRDPITGDMPWPGLIFGLAILALWYWCTDQVIVQRCLSAKNMSHVKADCTLCGYLKLLPMFLMVMPGMISRILYTEKIACVLPEECQKYCGTPVGCTNIAYPTLVVELMPNGLRGLMLSVMMASLMSSLTSIFNSASTLFTMDIYTKIRKKASEKELMIAGRLFILVLIGISIAWVPIVQSAQSGQLFDYIQSITSYLGPPIAAVFLLAIFCKRVNEQGAFWGLILGFLIGISRMITEFAYGTGSCMEPSNCPKIICGVHYLYFAIILFVISVITILIISFLTKPIPDVHLYRWCWSLRNSKEERIDLDAGEEEDIPEDSKDTIEIDTEAPQKKKGCFRRAYDLFCGLDQDKGPKMTKEEEEAMKMKMTDTSEKPLWRTVVNINGIILLAVAVFCHAYFA.

Residues 1-24 (MDSSTLSPAVTATDAPIPSYERIR) are Extracellular-facing. A helical membrane pass occupies residues 25 to 47 (NAADISVIVIYFVVVMAVGLWAM). At 48-66 (FSTNRGTVGGFFLAGRSMV) the chain is on the cytoplasmic side. The helical transmembrane segment at 67–90 (WWPIGASLFASNIGSGHFVGLAGT) threads the bilayer. Residues 91-95 (GAAAG) are Extracellular-facing. The chain crosses the membrane as a helical span at residues 96–117 (IAMGGFEWNALVLVVVLGWIFV). The Cytoplasmic segment spans residues 118-139 (PIYIKAGVVTMPEYLRKRFGGK). The chain crosses the membrane as a helical span at residues 140–169 (RIQIYLSVLSLLLYIFTKISADIFSGAIFI). Over 170–176 (NLALGLD) the chain is Extracellular. The helical transmembrane segment at 177 to 193 (IYLAIFILLAITALYTI) threads the bilayer. The Cytoplasmic segment spans residues 194–202 (TGGLAAVIY). The helical transmembrane segment at 203–221 (TDTLQTAIMLVGSFILTGF) threads the bilayer. Residues 222–275 (AFNEVGGYEAFMDKYMKAIPTKVSNGNFTAKEECYTPRADSFHIFRDPITGDMP) lie on the Extracellular side of the membrane. N-linked (GlcNAc...) asparagine glycosylation is present at N248. Intrachain disulfides connect C255/C511, C255/C611, C345/C351, C355/C361, and C517/C522. Residues 276 to 295 (WPGLIFGLAILALWYWCTDQ) form a helical membrane-spanning segment. Topologically, residues 296-309 (VIVQRCLSAKNMSH) are cytoplasmic. The helical transmembrane segment at 310–331 (VKADCTLCGYLKLLPMFLMVMP) threads the bilayer. Residues 332 to 375 (GMISRILYTEKIACVLPEECQKYCGTPVGCTNIAYPTLVVELMP) lie on the Extracellular side of the membrane. Residues 376–406 (NGLRGLMLSVMMASLMSSLTSIFNSASTLFT) form a helical membrane-spanning segment. At 407 to 422 (MDIYTKIRKKASEKEL) the chain is on the cytoplasmic side. Residues 423-444 (MIAGRLFILVLIGISIAWVPIV) form a helical membrane-spanning segment. Residues 445 to 451 (QSAQSGQ) are Extracellular-facing. Residues 452 to 477 (LFDYIQSITSYLGPPIAAVFLLAIFC) traverse the membrane as a helical segment. Q457 serves as a coordination point for D-glucose. Over 478–481 (KRVN) the chain is Cytoplasmic. Residues 482–504 (EQGAFWGLILGFLIGISRMITEF) traverse the membrane as a helical segment. The Extracellular portion of the chain corresponds to 505 to 525 (AYGTGSCMEPSNCPKIICGVH). Residues 526–547 (YLYFAIILFVISVITILIISFL) form a helical membrane-spanning segment. The Cytoplasmic segment spans residues 548–645 (TKPIPDVHLY…TSEKPLWRTV (98 aa)). S585 bears the Phosphoserine mark. T588 carries the phosphothreonine modification. The chain crosses the membrane as a helical span at residues 646–663 (VNINGIILLAVAVFCHAY). Over 664–665 (FA) the chain is Extracellular.

This sequence belongs to the sodium:solute symporter (SSF) (TC 2.A.21) family. Post-translationally, N-glycosylation is not necessary for the cotransporter function. Expressed in enterocytes and enteroendocrine cells of small intestine (at protein level). Expressed in S3 segments of renal proximal tubules (at protein level). Expressed in endometrial glandular and epithelial cells (at protein level).

The protein resides in the apical cell membrane. The enzyme catalyses D-glucose(out) + 2 Na(+)(out) = D-glucose(in) + 2 Na(+)(in). It catalyses the reaction D-galactose(out) + 2 Na(+)(out) = D-galactose(in) + 2 Na(+)(in). Enhanced by the interaction with PDZK1IP1/MAP17; but unlike SLC5A2/SGLT2, PDZK1IP1 is not essential for SLC5A1 transporter activity. Possibly modulated by cholesterol binding. Electrogenic Na(+)-coupled sugar symporter that actively transports D-glucose or D-galactose at the plasma membrane, with a Na(+) to sugar coupling ratio of 2:1. Transporter activity is driven by a transmembrane Na(+) electrochemical gradient set by the Na(+)/K(+) pump. Has a primary role in the transport of dietary monosaccharides from enterocytes to blood. Responsible for the absorption of D-glucose or D-galactose across the apical brush-border membrane of enterocytes, whereas basolateral exit is provided by GLUT2. Additionally, functions as a D-glucose sensor in enteroendocrine cells, triggering the secretion of the incretins GCG and GIP that control food intake and energy homeostasis. Together with SGLT2, functions in reabsorption of D-glucose from glomerular filtrate, playing a nonredundant role in the S3 segment of the proximal tubules. Transports D-glucose into endometrial epithelial cells, controlling glycogen synthesis and nutritional support for the embryo as well as the decidual transformation of endometrium prior to conception. Acts as a water channel enabling passive water transport in response to the osmotic gradient created upon sugar and Na(+) uptake. Has high water conductivity comparable to aquaporins and therefore is expected to play an important role in transepithelial water permeability, especially in the small intestine. This chain is Sodium/glucose cotransporter 1 (Slc5a1), found in Mus musculus (Mouse).